Here is an 860-residue protein sequence, read N- to C-terminus: Leucine--tRNA ligase (860 aa).

A 'HIGH' region motif is present at residues 42–52 (PYPSGRLHMGH). The 'KMSKS' region signature appears at 619-623 (KMSKS). Position 622 (lysine 622) interacts with ATP.

This sequence belongs to the class-I aminoacyl-tRNA synthetase family.

Its subcellular location is the cytoplasm. The catalysed reaction is tRNA(Leu) + L-leucine + ATP = L-leucyl-tRNA(Leu) + AMP + diphosphate. This is Leucine--tRNA ligase from Serratia proteamaculans (strain 568).